Consider the following 920-residue polypeptide: Vacuolar membrane protease (920 aa).

Residues 1–20 (MASSRAQRFNPIAFTPWPVT) are Cytoplasmic-facing. A helical membrane pass occupies residues 21–41 (CITTIVYLALLIPILVINLVV). At 42–378 (PSAPETNPKG…AFAVFRLHTL (337 aa)) the chain is on the vacuolar side. Residues N53, N116, and N119 are each glycosylated (N-linked (GlcNAc...) asparagine). Positions 175 and 187 each coordinate Zn(2+). Residue E221 is the Proton acceptor of the active site. E222 contributes to the Zn(2+) binding site. N-linked (GlcNAc...) asparagine glycosylation occurs at N238. E247 and H306 together coordinate Zn(2+). Residues 379-399 (FAISVALLVIAPLVIFITSVI) traverse the membrane as a helical segment. Residues 400–433 (LSKTDRMYLFSMSKSLEGTGDQVSLRGLRGFSRT) are Cytoplasmic-facing. Residues 434 to 454 (PIILVIATTIPICLAYLLEKV) form a helical membrane-spanning segment. Over 455–463 (NPYIVHSSQ) the chain is Vacuolar. Residues 464-484 (FSVWSMMFSAWIFLAWFLACA) form a helical membrane-spanning segment. Residues 485-495 (ADFFRPSALHR) are Cytoplasmic-facing. A helical transmembrane segment spans residues 496–516 (AYSYTWIFVATWIMLVINTVY). The Vacuolar segment spans residues 517-520 (ANQK). The chain crosses the membrane as a helical span at residues 521–541 (GIAAGYFLLFYFAGAFLATWI). Residues 542–659 (SYLELFALPR…TLPRWTWVLQ (118 aa)) are Cytoplasmic-facing. The segment at 556–605 (ARQTTGRRPSSLSSRLLTSSADELRSNASPSTAEFPGAAGEDTDPTESTS) is disordered. Residues 559-575 (TTGRRPSSLSSRLLTSS) are compositionally biased toward low complexity. Residues 660 to 680 (LLLLAPIVLILVGQLALFLTA) traverse the membrane as a helical segment. Residues 681–693 (SMCQVGSDGVSTF) are Vacuolar-facing. The helical transmembrane segment at 694–714 (VVYLACAVFTTLLCIPLFPLI) threads the bilayer. Over 715 to 720 (HRFTYH) the chain is Cytoplasmic. The helical transmembrane segment at 721–741 (IPTFLFLVFIGTLIYNLVAFP) threads the bilayer. Residues 742–920 (FSPANRLKTF…VEASHSFTIQ (179 aa)) lie on the Vacuolar side of the membrane. N760, N788, and N832 each carry an N-linked (GlcNAc...) asparagine glycan.

It belongs to the peptidase M28 family. It depends on Zn(2+) as a cofactor.

Its subcellular location is the vacuole membrane. Its function is as follows. May be involved in vacuolar sorting and osmoregulation. In Ajellomyces capsulatus (strain H143) (Darling's disease fungus), this protein is Vacuolar membrane protease.